Reading from the N-terminus, the 1004-residue chain is Glutamate [NMDA] receptor subunit 1 (1004 aa).

The signal sequence occupies residues 1–39 (MAGTDSPAAARFVYRCLLFAPAIVVGLLLPLTLPPIAAA). The Extracellular portion of the chain corresponds to 40–585 (QRHTASDNPS…TLVSFLQPFS (546 aa)). Asn-270, Asn-326, Asn-357, Asn-409, Asn-466, Asn-493, and Asn-513 each carry an N-linked (GlcNAc...) asparagine glycan. Glycine is bound by residues 542–544 (PLT) and Arg-549. Residues 586–606 (NTLWILVMVSVHVVALVLYLL) traverse the membrane as a helical segment. Topologically, residues 607 to 663 (DRFSPFGRFKLSHSDSNEEKALNLSSAVWFAWGVLLNSGIGEGTPRSFSARVLGMVW) are cytoplasmic. The helical transmembrane segment at 664 to 684 (AGFAMIIVASYTANLAAFLVL) threads the bilayer. The Extracellular portion of the chain corresponds to 685 to 843 (ERPKTKLSGI…KTPNTLGLKN (159 aa)). An N-linked (GlcNAc...) asparagine glycan is attached at Asn-705. Glycine-binding residues include Ser-715 and Asp-759. A helical transmembrane segment spans residues 844–864 (MAGVFILVGVGIAGGVGLIII). Over 865–1004 (EVIYKKHQVK…YTSDVSHLVV (140 aa)) the chain is Cytoplasmic. A disordered region spans residues 980–1004 (TRPQQNILPPRYSPGYTSDVSHLVV). Residues 994-1004 (GYTSDVSHLVV) show a composition bias toward polar residues.

Belongs to the glutamate-gated ion channel (TC 1.A.10.1) family. As to quaternary structure, forms a heteromeric NMDA channel with Nmdar2.

It is found in the cell membrane. It localises to the postsynaptic cell membrane. Its subcellular location is the postsynaptic density. Its function is as follows. NMDA receptor subtype of glutamate-gated ion channels with high calcium permeability and voltage-dependent sensitivity to magnesium. Mediated by glycine. This protein plays a key role in synaptic plasticity, synaptogenesis, excitotoxicity, memory acquisition and learning. It mediates neuronal functions in glutamate neurotransmission. Is involved in the cell surface targeting of NMDA receptors. Plays a role in associative learning and in long-term memory consolidation. The sequence is that of Glutamate [NMDA] receptor subunit 1 from Drosophila persimilis (Fruit fly).